The primary structure comprises 482 residues: Bifunctional protein GlmU (482 aa).

Positions 1–238 (MSATSPAAVV…HREILGINNR (238 aa)) are pyrophosphorylase. Residues 12 to 15 (LAAG), Lys-26, Gln-79, and 84 to 85 (GT) each bind UDP-N-acetyl-alpha-D-glucosamine. A Mg(2+)-binding site is contributed by Asp-110. UDP-N-acetyl-alpha-D-glucosamine contacts are provided by Gly-147, Glu-163, Asn-178, and Asn-236. Position 236 (Asn-236) interacts with Mg(2+). The interval 239 to 259 (LQLAEARRLLNERLLERAMLA) is linker. Positions 260-482 (GVTVVDPAST…ASSQETDGQS (223 aa)) are N-acetyltransferase. The UDP-N-acetyl-alpha-D-glucosamine site is built by Arg-341 and Lys-359. The active-site Proton acceptor is the His-371. UDP-N-acetyl-alpha-D-glucosamine is bound by residues Tyr-374 and Asn-385. Acetyl-CoA contacts are provided by residues Ala-388, 394 to 395 (NY), Ser-413, Ala-431, and Arg-448. Residues 458–482 (VARKRPGSAAAQAAQASSQETDGQS) form a disordered region. Residues 465–476 (SAAAQAAQASSQ) are compositionally biased toward low complexity.

This sequence in the N-terminal section; belongs to the N-acetylglucosamine-1-phosphate uridyltransferase family. The protein in the C-terminal section; belongs to the transferase hexapeptide repeat family. As to quaternary structure, homotrimer. Mg(2+) serves as cofactor.

Its subcellular location is the cytoplasm. It catalyses the reaction alpha-D-glucosamine 1-phosphate + acetyl-CoA = N-acetyl-alpha-D-glucosamine 1-phosphate + CoA + H(+). It carries out the reaction N-acetyl-alpha-D-glucosamine 1-phosphate + UTP + H(+) = UDP-N-acetyl-alpha-D-glucosamine + diphosphate. It functions in the pathway nucleotide-sugar biosynthesis; UDP-N-acetyl-alpha-D-glucosamine biosynthesis; N-acetyl-alpha-D-glucosamine 1-phosphate from alpha-D-glucosamine 6-phosphate (route II): step 2/2. It participates in nucleotide-sugar biosynthesis; UDP-N-acetyl-alpha-D-glucosamine biosynthesis; UDP-N-acetyl-alpha-D-glucosamine from N-acetyl-alpha-D-glucosamine 1-phosphate: step 1/1. Its pathway is bacterial outer membrane biogenesis; LPS lipid A biosynthesis. Catalyzes the last two sequential reactions in the de novo biosynthetic pathway for UDP-N-acetylglucosamine (UDP-GlcNAc). The C-terminal domain catalyzes the transfer of acetyl group from acetyl coenzyme A to glucosamine-1-phosphate (GlcN-1-P) to produce N-acetylglucosamine-1-phosphate (GlcNAc-1-P), which is converted into UDP-GlcNAc by the transfer of uridine 5-monophosphate (from uridine 5-triphosphate), a reaction catalyzed by the N-terminal domain. This chain is Bifunctional protein GlmU, found in Streptomyces griseus subsp. griseus (strain JCM 4626 / CBS 651.72 / NBRC 13350 / KCC S-0626 / ISP 5235).